Reading from the N-terminus, the 101-residue chain is Urease subunit beta (101 aa).

The protein belongs to the urease beta subunit family. In terms of assembly, heterotrimer of UreA (gamma), UreB (beta) and UreC (alpha) subunits. Three heterotrimers associate to form the active enzyme.

The protein resides in the cytoplasm. It carries out the reaction urea + 2 H2O + H(+) = hydrogencarbonate + 2 NH4(+). It functions in the pathway nitrogen metabolism; urea degradation; CO(2) and NH(3) from urea (urease route): step 1/1. This is Urease subunit beta from Mesorhizobium japonicum (strain LMG 29417 / CECT 9101 / MAFF 303099) (Mesorhizobium loti (strain MAFF 303099)).